Consider the following 564-residue polypeptide: NAD-dependent malic enzyme (564 aa).

Residue Y102 is the Proton donor of the active site. Position 155 (R155) interacts with NAD(+). K173 acts as the Proton acceptor in catalysis. A divalent metal cation-binding residues include E244, D245, and D268. Residues D268 and N417 each coordinate NAD(+).

Belongs to the malic enzymes family. Homotetramer. Mg(2+) serves as cofactor. Requires Mn(2+) as cofactor.

It catalyses the reaction (S)-malate + NAD(+) = pyruvate + CO2 + NADH. The catalysed reaction is oxaloacetate + H(+) = pyruvate + CO2. This is NAD-dependent malic enzyme from Pseudomonas aeruginosa (strain LESB58).